Consider the following 906-residue polypeptide: Translation initiation factor IF-2 (906 aa).

Disordered stretches follow at residues 94-125 (APEK…PETA), 165-232 (ESEA…TGKK), and 270-321 (RQEQ…SSEV). Composition is skewed to basic and acidic residues over residues 165–176 (ESEAEKGTEIEK), 222–232 (GPAEARETGKK), and 270–284 (RQEQ…KREA). Positions 299 to 313 (QQRRSLKRGGKRKKY) are enriched in basic residues. The region spanning 405 to 574 (ERPPVITIMG…LLQAEMMELK (170 aa)) is the tr-type G domain. The interval 414-421 (GHVDHGKT) is G1. 414-421 (GHVDHGKT) lines the GTP pocket. The G2 stretch occupies residues 439–443 (GITQH). Residues 460–463 (DTPG) form a G3 region. GTP is bound by residues 460-464 (DTPGH) and 514-517 (NKMD). The G4 stretch occupies residues 514–517 (NKMD). Residues 550–552 (SAH) are G5.

It belongs to the TRAFAC class translation factor GTPase superfamily. Classic translation factor GTPase family. IF-2 subfamily.

Its subcellular location is the cytoplasm. Functionally, one of the essential components for the initiation of protein synthesis. Protects formylmethionyl-tRNA from spontaneous hydrolysis and promotes its binding to the 30S ribosomal subunits. Also involved in the hydrolysis of GTP during the formation of the 70S ribosomal complex. The sequence is that of Translation initiation factor IF-2 from Sulfurovum sp. (strain NBC37-1).